Reading from the N-terminus, the 438-residue chain is MPVAASAIYFLNLRGDVLINRTYRDDVGGNMVDAFRTHIMQTKELGNCPVRQIGGCSFVYMRISNVYIVIVVSSNANVACGFKFVVEAVALFKSYFGGAFDEDAIRNNFVLIYELLDEIMDFGYPQNLSPEILKLYITQEGVRSPFSSKPKDKPVPNATLQVTGAVGWRREGLAYKKNEVFLDIVESVNLLMSSKGNVLRCDVTGKVLMKCFLSGMPDLKLGLNDKIGLEKESEMKSRPAKSGKTIELDDVTFHQCVNLTRFNSEKTVSFVPPDGEFELMKYRITEGVNLPFRVLPTIKELGRTRMEVNVKVKSVFGAKMFALGVVVKIPVPKQTAKTNFQVTTGRAKYNPSIDCLVWKIRKFPGQTESTLSAEIELISTMGEKKSWTRPPIQMEFQVPMFTASGLRVRFLKVWEKSGYNTVEWVRYITKAGSYEIRC.

The 261-residue stretch at 177–437 (KNEVFLDIVE…ITKAGSYEIR (261 aa)) folds into the MHD domain.

Belongs to the adaptor complexes medium subunit family. Adaptor protein complex 2 (AP-2) is a heterotetramer composed of two large adaptins (alpha-type and beta-type subunits), a medium adaptin (mu-type subunit) and a small adaptin (sigma-type subunit).

It is found in the cell membrane. Its subcellular location is the membrane. It localises to the coated pit. The protein resides in the golgi apparatus. The protein localises to the trans-Golgi network membrane. Subunit of the adaptor protein complex 2 (AP-2). Adaptor protein complexes function in protein transport via transport vesicles in different membrane traffic pathways. Adaptor protein complexes are vesicle coat components and appear to be involved in cargo selection and vesicle formation. AP-2 is involved in clathrin-dependent endocytosis in which cargo proteins are incorporated into vesicles surrounded by clathrin (clathrin-coated vesicles, CCVs) which are destined for fusion with the early endosome. AP-2 recognizes Y-X-X-Phi endocytosis signal motif within the cytosolic tails of transmembrane cargo molecules. The complex binds polyphosphoinositides. The protein is AP-2 complex subunit mu (AP2M) of Arabidopsis thaliana (Mouse-ear cress).